Consider the following 334-residue polypeptide: N-acetyl-gamma-glutamyl-phosphate reductase (334 aa).

Residue Cys-154 is part of the active site.

Belongs to the NAGSA dehydrogenase family. Type 1 subfamily.

It localises to the cytoplasm. The enzyme catalyses N-acetyl-L-glutamate 5-semialdehyde + phosphate + NADP(+) = N-acetyl-L-glutamyl 5-phosphate + NADPH + H(+). It functions in the pathway amino-acid biosynthesis; L-arginine biosynthesis; N(2)-acetyl-L-ornithine from L-glutamate: step 3/4. Functionally, catalyzes the NADPH-dependent reduction of N-acetyl-5-glutamyl phosphate to yield N-acetyl-L-glutamate 5-semialdehyde. This is N-acetyl-gamma-glutamyl-phosphate reductase from Photorhabdus laumondii subsp. laumondii (strain DSM 15139 / CIP 105565 / TT01) (Photorhabdus luminescens subsp. laumondii).